Consider the following 88-residue polypeptide: Small ribosomal subunit protein bS20 (88 aa).

The segment at Met1–Arg25 is disordered.

It belongs to the bacterial ribosomal protein bS20 family.

Binds directly to 16S ribosomal RNA. The chain is Small ribosomal subunit protein bS20 from Azorhizobium caulinodans (strain ATCC 43989 / DSM 5975 / JCM 20966 / LMG 6465 / NBRC 14845 / NCIMB 13405 / ORS 571).